Reading from the N-terminus, the 473-residue chain is MTLRIFDSASRQLRDFVPLREGRASVYLCGATVQSAPHIGHLRSGVAFDILRNWLTYMGLDVAFIRNVTDIDDKILNKAAEHNRPWWEWAATYEREFQWAYDQLGVTPPSLEPHATGHVPEMIEYMQRIIDAGHGYAVDGNVYLSPMSLPDYGSLSGQKLDEMDQGESAGTGKRDPRDFTLWKAAKPGEPSWDTPWGRGRPGWHLECTTMATKYLGAEFDIHAGGLDLKFPHHENEIAQAHAAGDGFARYWMHNGWVTMAGEKMSKSLGNVLSVPNLLQIVRPVELRYYLGSAHYRSMLEFSEDALREAAAGYRRLEKFVHAASSVAGKNDRTLGRSEVTDAFTDAMNDDIGVPAALAEVHKVVRSSNSRLDAARRGDSDAVESVVSAGEQVRAMLGVLGVDPLDEKWQEIAAESGAEHDALDTLVRAELDIRAKARAEKDWATADAVRDRLAAAGIVVTDTPSGAEWELSEQ.

C29 lines the Zn(2+) pocket. The 'HIGH' region motif lies at 31–41; that stretch reads ATVQSAPHIGH. 3 residues coordinate Zn(2+): C207, H232, and E236. The 'KMSKS' region signature appears at 263–267; that stretch reads KMSKS. ATP is bound at residue K266.

The protein belongs to the class-I aminoacyl-tRNA synthetase family. In terms of assembly, monomer. Zn(2+) serves as cofactor.

It is found in the cytoplasm. It catalyses the reaction tRNA(Cys) + L-cysteine + ATP = L-cysteinyl-tRNA(Cys) + AMP + diphosphate. In Corynebacterium kroppenstedtii (strain DSM 44385 / JCM 11950 / CIP 105744 / CCUG 35717), this protein is Cysteine--tRNA ligase.